Consider the following 178-residue polypeptide: Oligoribonuclease (178 aa).

Positions 7 to 168 constitute an Exonuclease domain; that stretch reads LIWIDLEMTG…DDIRESIAEL (162 aa). Residue Tyr-128 is part of the active site.

It belongs to the oligoribonuclease family.

It localises to the cytoplasm. Functionally, 3'-to-5' exoribonuclease specific for small oligoribonucleotides. In Pseudomonas savastanoi pv. phaseolicola (strain 1448A / Race 6) (Pseudomonas syringae pv. phaseolicola (strain 1448A / Race 6)), this protein is Oligoribonuclease.